The primary structure comprises 103 residues: Small ribosomal subunit protein uS10 (103 aa).

Belongs to the universal ribosomal protein uS10 family. Part of the 30S ribosomal subunit.

Functionally, involved in the binding of tRNA to the ribosomes. The sequence is that of Small ribosomal subunit protein uS10 from Ralstonia pickettii (strain 12J).